We begin with the raw amino-acid sequence, 251 residues long: 5'-nucleotidase SurE (251 aa).

Residues D8, D9, S39, and N91 each contribute to the a divalent metal cation site.

This sequence belongs to the SurE nucleotidase family. Requires a divalent metal cation as cofactor.

It localises to the cytoplasm. It catalyses the reaction a ribonucleoside 5'-phosphate + H2O = a ribonucleoside + phosphate. Nucleotidase that shows phosphatase activity on nucleoside 5'-monophosphates. The chain is 5'-nucleotidase SurE from Halorhodospira halophila (strain DSM 244 / SL1) (Ectothiorhodospira halophila (strain DSM 244 / SL1)).